A 155-amino-acid polypeptide reads, in one-letter code: Ribonuclease H (155 aa).

An RNase H type-1 domain is found at 4–145; it reads NISKVVIYTD…ADKLAAQGRQ (142 aa). The Mg(2+) site is built by aspartate 13, glutamate 51, aspartate 73, and aspartate 137.

This sequence belongs to the RNase H family. Monomer. Requires Mg(2+) as cofactor.

It localises to the cytoplasm. The catalysed reaction is Endonucleolytic cleavage to 5'-phosphomonoester.. Endonuclease that specifically degrades the RNA of RNA-DNA hybrids. This is Ribonuclease H from Rickettsia canadensis (strain McKiel).